Consider the following 42-residue polypeptide: Phospholipase A1 (42 aa).

The protein belongs to the AB hydrolase superfamily. Lipase family. Post-translationally, contains six disulfide bonds. Expressed by the venom gland.

It localises to the secreted. The catalysed reaction is a 1,2-diacyl-sn-glycero-3-phosphocholine + H2O = a 2-acyl-sn-glycero-3-phosphocholine + a fatty acid + H(+). Catalyzes the hydrolysis of phosphatidylcholine with phospholipase A1 activity. May act as an allergen and induce hemolytic activity. The sequence is that of Phospholipase A1 from Polistes gallicus (Paper wasp).